The following is a 269-amino-acid chain: Polyhedrin (269 aa).

Functionally, major component of the virus occlusion bodies, which are large proteinaceous structures (polyhedra), that protect the virus from the outside environment for extended periods until they are ingested by insect larvae. The sequence is that of Polyhedrin from Euxoa scandens cypovirus (EsCPV).